Consider the following 216-residue polypeptide: MOB kinase activator-like 1 homolog B (216 aa).

The Zn(2+) site is built by Cys79, Cys84, His161, and His166.

The protein belongs to the MOB1/phocein family.

The protein is MOB kinase activator-like 1 homolog B (mobB) of Dictyostelium discoideum (Social amoeba).